The chain runs to 256 residues: Type III pantothenate kinase 1 (256 aa).

An ATP-binding site is contributed by 6–13; it reads DIGNSHIF. Residue 107-110 participates in substrate binding; the sequence is GADR. Asp109 (proton acceptor) is an active-site residue. A K(+)-binding site is contributed by Asp130. Thr133 lines the ATP pocket. Thr185 contacts substrate.

Belongs to the type III pantothenate kinase family. As to quaternary structure, homodimer. It depends on NH4(+) as a cofactor. K(+) is required as a cofactor.

Its subcellular location is the cytoplasm. It carries out the reaction (R)-pantothenate + ATP = (R)-4'-phosphopantothenate + ADP + H(+). The protein operates within cofactor biosynthesis; coenzyme A biosynthesis; CoA from (R)-pantothenate: step 1/5. Catalyzes the phosphorylation of pantothenate (Pan), the first step in CoA biosynthesis. The protein is Type III pantothenate kinase 1 of Francisella tularensis subsp. holarctica (strain LVS).